The sequence spans 558 residues: Thermosome subunit alpha (558 aa).

The disordered stretch occupies residues 536–558 (TEKGKKEGGEGAGAETPGAPSLE). The span at 548–558 (GAETPGAPSLE) shows a compositional bias: low complexity.

Belongs to the TCP-1 chaperonin family. As to quaternary structure, forms a Heterooligomeric complex of two stacked eight-membered rings.

Molecular chaperone; binds unfolded polypeptides in vitro, and has a weak ATPase activity. The protein is Thermosome subunit alpha (thsA) of Sulfolobus acidocaldarius (strain ATCC 33909 / DSM 639 / JCM 8929 / NBRC 15157 / NCIMB 11770).